A 218-amino-acid polypeptide reads, in one-letter code: Non-structural protein NS3 (218 aa).

The protein belongs to the orbivirus NS3 family.

May play a role in the release of virions from infected cells. The protein is Non-structural protein NS3 (Segment-10) of Camelus dromedarius (Dromedary).